Reading from the N-terminus, the 155-residue chain is Peptide deformylase (155 aa).

Residues cysteine 88 and histidine 130 each contribute to the Fe cation site. Residue glutamate 131 is part of the active site. Histidine 134 is a binding site for Fe cation.

Belongs to the polypeptide deformylase family. Fe(2+) serves as cofactor.

The catalysed reaction is N-terminal N-formyl-L-methionyl-[peptide] + H2O = N-terminal L-methionyl-[peptide] + formate. Its function is as follows. Removes the formyl group from the N-terminal Met of newly synthesized proteins. Requires at least a dipeptide for an efficient rate of reaction. N-terminal L-methionine is a prerequisite for activity but the enzyme has broad specificity at other positions. This chain is Peptide deformylase, found in Pelotomaculum thermopropionicum (strain DSM 13744 / JCM 10971 / SI).